The sequence spans 229 residues: Large ribosomal subunit protein uL1 (229 aa).

This sequence belongs to the universal ribosomal protein uL1 family. As to quaternary structure, part of the 50S ribosomal subunit.

In terms of biological role, binds directly to 23S rRNA. The L1 stalk is quite mobile in the ribosome, and is involved in E site tRNA release. Protein L1 is also a translational repressor protein, it controls the translation of the L11 operon by binding to its mRNA. The polypeptide is Large ribosomal subunit protein uL1 (Caulobacter sp. (strain K31)).